The sequence spans 489 residues: Tyrosine-protein phosphatase MSG5 (489 aa).

The segment covering 1-18 (MQFHSDKQHLDSKTDIDF) has biased composition (basic and acidic residues). Residues 1–30 (MQFHSDKQHLDSKTDIDFKPNSPRSLQNRN) are disordered. A phosphoserine mark is found at serine 22, serine 98, and serine 151. Threonine 178 carries the phosphothreonine modification. Positions 233–375 (GPLLVLPPNL…LMEWGTMLSK (143 aa)) constitute a Tyrosine-protein phosphatase domain. The active-site Phosphocysteine intermediate is cysteine 319. 2 disordered regions span residues 375-401 (KNSPGEEGETVHMPEEDDIGNNEVSST) and 419-489 (LSSS…MFLP). Residues 419 to 450 (LSSSPNDSSVNSSEVTPRTPATLTGARTALAT) are compositionally biased toward low complexity. Over residues 451-460 (ERGEDDEHCK) the composition is skewed to basic and acidic residues.

The protein belongs to the protein-tyrosine phosphatase family. Non-receptor class dual specificity subfamily.

The enzyme catalyses O-phospho-L-tyrosyl-[protein] + H2O = L-tyrosyl-[protein] + phosphate. Dual specificity phosphatase that dephosphorylates MAP kinase FUS3 on both a Tyr and a Ser or Thr. Has a role in adaptation to pheromone. This Saccharomyces cerevisiae (strain ATCC 204508 / S288c) (Baker's yeast) protein is Tyrosine-protein phosphatase MSG5 (MSG5).